A 498-amino-acid polypeptide reads, in one-letter code: Probable cytosol aminopeptidase (498 aa).

Mn(2+)-binding residues include Lys264 and Asp269. Lys276 is a catalytic residue. Asp287, Asp346, and Glu348 together coordinate Mn(2+). Residue Arg350 is part of the active site.

This sequence belongs to the peptidase M17 family. The cofactor is Mn(2+).

The protein localises to the cytoplasm. The catalysed reaction is Release of an N-terminal amino acid, Xaa-|-Yaa-, in which Xaa is preferably Leu, but may be other amino acids including Pro although not Arg or Lys, and Yaa may be Pro. Amino acid amides and methyl esters are also readily hydrolyzed, but rates on arylamides are exceedingly low.. It carries out the reaction Release of an N-terminal amino acid, preferentially leucine, but not glutamic or aspartic acids.. Presumably involved in the processing and regular turnover of intracellular proteins. Catalyzes the removal of unsubstituted N-terminal amino acids from various peptides. This is Probable cytosol aminopeptidase from Xanthobacter autotrophicus (strain ATCC BAA-1158 / Py2).